A 69-amino-acid polypeptide reads, in one-letter code: Peptide Hact-1 (69 aa).

The signal sequence occupies residues 1-21 (MDRKFHLCLLLVILGTIIVQG). Residues 22 to 57 (APLENENDADPDKPQKYRYYLKRATTEKKDNDPAKP) constitute a propeptide that is removed on maturation. Cysteine 59 and cysteine 68 are oxidised to a cystine.

Tentacle (ecto and/or endoderm tissue), and possibly also nematoblasts.

It is found in the secreted. It localises to the nematocyst. Peptide with unknown function. Has a limited effect on human peripheral blood mononuclear cells. Does not show activity against both Gram-positive and Gram-negative bacteria nor is it active on the 26 voltage-gated ion channels tested. This is Peptide Hact-1 from Heliofungia actiniformis (Mushroom coral).